Here is a 329-residue protein sequence, read N- to C-terminus: Oxidoreductase sirO (329 aa).

Asp54 lines the NADP(+) pocket. Tyr59 acts as the Proton donor in catalysis. His118 is a substrate binding site. Residues 148 to 149, Gln174, 203 to 213, and 288 to 296 contribute to the NADP(+) site; these read SN, SPLCCGLLINA, and SSARQLEES.

The protein belongs to the aldo/keto reductase family. Aldo/keto reductase 2 subfamily.

It participates in mycotoxin biosynthesis. Its function is as follows. Oxidoreductase; part of the gene cluster that mediates the biosynthesis of sirodesmin PL, an epipolythiodioxopiperazine (ETP) characterized by a disulfide bridged cyclic dipeptide and that acts as a phytotoxin which is involved in the blackleg didease of canola. SirD catalyzes the O-prenylation of L-tyrosine (L-Tyr) in the presence of dimethylallyl diphosphate (DMAPP) to yield 4-O-dimethylallyl-L-Tyr, and therefore represents probably the first pathway-specific enzyme in the biosynthesis of sirodesmin PL. 4-O-dimethylallyl-L-Tyr, then undergoes condensation with L-Ser in a reaction catalyzed by the non-ribosomal peptide synthase sirP to form the diketopiperazine (DKP) backbone. Further bishydroxylation of the DKP performed by the cytochrome P450 monooxygenase sirC leads to the production of the intermediate phomamide. This step is essential to form the reactive thiol group required for toxicity of sirodesmin PL. The next steps of sirodesmin biosynthesis are not well understood yet, but some predictions could be made from intermediate compounds identification. Phomamide is converted into phomalizarine via oxidation, probably by sirT. Further oxidation, methylation (by sirM or sirN) and reduction steps convert phomalizarine to deacetyl sirodesmin. Finally, acetyltransferase sirH probably acetylates deacetyl sirodesmin to produce sirodesmin PL. In Leptosphaeria maculans (Blackleg fungus), this protein is Oxidoreductase sirO.